We begin with the raw amino-acid sequence, 309 residues long: Epidermal retinol dehydrogenase 2 (309 aa).

A helical membrane pass occupies residues 11 to 31 (LFIFLGKSLFSLLEAMIFALL). 44 to 68 (LITGAGSGLGRLLALQFARLGSVLV) is an NADP(+) binding site. Serine 177 serves as a coordination point for substrate. The Proton acceptor role is filled by tyrosine 190. The chain crosses the membrane as a helical span at residues 270-290 (LLYFMMFLKSFLPLKTGLLIA).

It belongs to the short-chain dehydrogenases/reductases (SDR) family. Detected in adult lung. Detected at low levels in adult brain, heart, testis, placenta, cervix, pancreas, uterus, stomach, rectum, small intestine, colon, esophagus, thymus, skin, and skin keratinocyte. Expression is higher in psoriasis lesions relative to unaffected skin from psoriasis patients. Detected in fetal kidney, skin and lung.

Its subcellular location is the endoplasmic reticulum membrane. The catalysed reaction is all-trans-retinol--[retinol-binding protein] + NAD(+) = all-trans-retinal--[retinol-binding protein] + NADH + H(+). It participates in cofactor metabolism; retinol metabolism. Oxidoreductase with strong preference for NAD. Active in both the oxidative and reductive directions. Oxidizes all-trans-retinol in all-trans-retinaldehyde. No activity was detected with 11-cis-retinol or 11-cis-retinaldehyde as substrates with either NAD(+)/NADH or NADP(+)/NADPH. The chain is Epidermal retinol dehydrogenase 2 from Homo sapiens (Human).